A 378-amino-acid chain; its full sequence is Putative glutamate--cysteine ligase 2 (378 aa).

This sequence belongs to the glutamate--cysteine ligase type 2 family. YbdK subfamily.

The enzyme catalyses L-cysteine + L-glutamate + ATP = gamma-L-glutamyl-L-cysteine + ADP + phosphate + H(+). In terms of biological role, ATP-dependent carboxylate-amine ligase which exhibits weak glutamate--cysteine ligase activity. The polypeptide is Putative glutamate--cysteine ligase 2 (Bdellovibrio bacteriovorus (strain ATCC 15356 / DSM 50701 / NCIMB 9529 / HD100)).